The primary structure comprises 1722 residues: Lymphocyte antigen 75 (1722 aa).

The signal sequence occupies residues 1 to 27; it reads MGTRRVTPGCAAGLLVLLLRCFGLAEP. The Extracellular portion of the chain corresponds to 28–1666; the sequence is SEFSGDDSFT…VVCKVPLSPD (1639 aa). In terms of domain architecture, Ricin B-type lectin spans 32-182; the sequence is GDDSFTIVNE…FLVGETWHHD (151 aa). Asn-135 carries an N-linked (GlcNAc...) asparagine glycan. The region spanning 164–211 is the Fibronectin type-II domain; it reads SYGRPCEFPFLVGETWHHDCIRDENHSGPWCATTLNYEYDQKWGICLK. Intrachain disulfides connect Cys-169–Cys-194, Cys-183–Cys-209, Cys-247–Cys-340, and Cys-317–Cys-332. The region spanning 225–341 is the C-type lectin 1 domain; the sequence is QIGSCYQFNN…CEAQQPYVCK (117 aa). 2 N-linked (GlcNAc...) asparagine glycosylation sites follow: Asn-345 and Asn-377. C-type lectin domains follow at residues 368-486, 493-625, and 652-791; these read QNGF…YVCK, NDTR…ICKK, and SNLS…WVCQ. Cystine bridges form between Cys-389–Cys-485 and Cys-462–Cys-477. Asn-529 carries N-linked (GlcNAc...) asparagine glycosylation. Disulfide bonds link Cys-597–Cys-614, Cys-678–Cys-790, and Cys-752–Cys-782. Asn-843 and Asn-865 each carry an N-linked (GlcNAc...) asparagine glycan. Tyr-933 is modified (phosphotyrosine). N-linked (GlcNAc...) asparagine glycosylation is found at Asn-934 and Asn-1076. C-type lectin domains are found at residues 958–1091 and 1110–1222; these read FQNK…LCQK and YLNN…ICYY. Intrachain disulfides connect Cys-1060–Cys-1080 and Cys-1197–Cys-1211. Asn-1225, Asn-1320, and Asn-1392 each carry an N-linked (GlcNAc...) asparagine glycan. Residues 1251–1374 enclose the C-type lectin 7 domain; that stretch reads FQNSCYNFMI…VIDETLHFYQ (124 aa). 2 consecutive C-type lectin domains span residues 1401–1513 and 1542–1661; these read YEDG…ICYK and YGDH…VCKV. An intrachain disulfide couples Cys-1488 to Cys-1502. Residues Asn-1593 and Asn-1626 are each glycosylated (N-linked (GlcNAc...) asparagine). Cys-1635 and Cys-1650 form a disulfide bridge. The chain crosses the membrane as a helical span at residues 1667–1691; sequence YRGIAVLFAVLSVLALISGLIWFLV. The Cytoplasmic portion of the chain corresponds to 1692–1722; it reads QRNHFRWTGLSSVRYEHGANEDEVMLPSFHD. Ser-1703 and Ser-1719 each carry phosphoserine.

Expressed in the thymus and cultured bone marrow cells.

It localises to the membrane. Its function is as follows. Acts as an endocytic receptor to direct captured antigens from the extracellular space to a specialized antigen-processing compartment. Causes reduced proliferation of B lymphocytes. The sequence is that of Lymphocyte antigen 75 (LY75) from Mesocricetus auratus (Golden hamster).